Reading from the N-terminus, the 184-residue chain is Uroplakin-2 (184 aa).

The first 25 residues, 1–25 (MASTLPVQTLPLILILLAVLAPGTA), serve as a signal peptide directing secretion. The propeptide occupies 26-84 (DFNISSLSGLLSPALTESLLIALPPCHLTGGNATLMVRRANDSKVVKSDFVVPPCRGRR). Asn-28, Asn-57, and Asn-66 each carry an N-linked (GlcNAc...) asparagine glycan. Topologically, residues 85–155 (ELVSVVDSGS…IGLGMARTGG (71 aa)) are lumenal. Residues 156-180 (MVVITVLLSVAMFLLVVGLIVALHW) form a helical membrane-spanning segment. Topologically, residues 181 to 184 (DARK) are cytoplasmic.

The protein belongs to the uroplakin-2 family. As to quaternary structure, interacts with uroplakin-1a (UPK1A).

The protein localises to the cell membrane. Functionally, component of the asymmetric unit membrane (AUM); a highly specialized biomembrane elaborated by terminally differentiated urothelial cells. May play an important role in regulating the assembly of the AUM. The protein is Uroplakin-2 (Upk2) of Mus musculus (Mouse).